Here is a 1796-residue protein sequence, read N- to C-terminus: U3 small nucleolar RNA-associated protein 10 (1796 aa).

HEAT repeat units lie at residues 586 to 623 (LDLQAMIPYCVAALSDPAKKVRQAAADLITVLSKSNAE), 656 to 692 (LLQEIIVPALEESVLDEEHISNVLRSHLQSTKDSATG), 861 to 898 (DLTTNILNAFLESLQDIPKITTDSPATKRRRTSSSDHS), 983 to 1021 (DTSVGHGDVLVQCIQKSSSPAVQNSALLLVASLANTAPD), 1052 to 1089 (QTIKEVIPPLVETFRKSRRNLVTSAAELLSSFVIAYEH), 1161 to 1198 (QPKPTLAATLFNRNTDDDQDLHKTALKELTLLPKVLSS), 1258 to 1295 (LSIGEFIKAVENLLDRPSISLRQKVLRTLEVRVDQESN), 1302 to 1340 (TVLLAFLPQLTAVIRDSDDIAYKHTAVACVDKIAEKYGK), 1344 to 1383 (EAVAAAATTIAGDCCLGQPDKRLRVMALLCLASLVDVLQD), 1492 to 1529 (SAVEEYLKLLATVLDKHPSTIIAKHISTLSTIFLSALD), 1711 to 1748 (DHRKELNAAVLRRLRSPSASVRLAAVRCEQSLTDTLGE), and 1752 to 1789 (EMLSEMLPYISELQDDDDEDVEKETHRWITKIEAILGE). The segment at 881–901 (TTDSPATKRRRTSSSDHSRGV) is disordered.

Belongs to the HEATR1/UTP10 family. As to quaternary structure, component of the ribosomal small subunit (SSU) processome.

Its subcellular location is the nucleus. It localises to the nucleolus. Its function is as follows. Involved in nucleolar processing of pre-18S ribosomal RNA. Involved in ribosome biosynthesis. This is U3 small nucleolar RNA-associated protein 10 from Pyricularia oryzae (strain 70-15 / ATCC MYA-4617 / FGSC 8958) (Rice blast fungus).